Here is a 446-residue protein sequence, read N- to C-terminus: Tryptophan synthase beta chain 2 (446 aa).

Lysine 110 is subject to N6-(pyridoxal phosphate)lysine.

The protein belongs to the TrpB family. In terms of assembly, tetramer of two alpha and two beta chains. Pyridoxal 5'-phosphate serves as cofactor.

It carries out the reaction (1S,2R)-1-C-(indol-3-yl)glycerol 3-phosphate + L-serine = D-glyceraldehyde 3-phosphate + L-tryptophan + H2O. The protein operates within amino-acid biosynthesis; L-tryptophan biosynthesis; L-tryptophan from chorismate: step 5/5. Functionally, the beta subunit is responsible for the synthesis of L-tryptophan from indole and L-serine. This chain is Tryptophan synthase beta chain 2 (trpB2), found in Pyrococcus furiosus (strain ATCC 43587 / DSM 3638 / JCM 8422 / Vc1).